We begin with the raw amino-acid sequence, 528 residues long: Peptide chain release factor 3 (528 aa).

The region spanning 11 to 279 is the tr-type G domain; that stretch reads EKRRTFAIIS…GLVEWAPKPL (269 aa). GTP is bound by residues 20-27, 88-92, and 142-145; these read SHPDAGKT, DTPGH, and NKCD.

Belongs to the TRAFAC class translation factor GTPase superfamily. Classic translation factor GTPase family. PrfC subfamily.

The protein localises to the cytoplasm. Increases the formation of ribosomal termination complexes and stimulates activities of RF-1 and RF-2. It binds guanine nucleotides and has strong preference for UGA stop codons. It may interact directly with the ribosome. The stimulation of RF-1 and RF-2 is significantly reduced by GTP and GDP, but not by GMP. This Psychromonas ingrahamii (strain DSM 17664 / CCUG 51855 / 37) protein is Peptide chain release factor 3.